A 125-amino-acid chain; its full sequence is Prepro-urotensin II-alpha (125 aa).

The N-terminal stretch at 1–21 (MMCNLLLSFSVLLLSCTHLVA) is a signal peptide. Positions 109-111 (QFR) are excised as a propeptide. A disulfide bridge connects residues Cys-119 and Cys-124.

The protein belongs to the urotensin-2 family.

It localises to the secreted. Its function is as follows. Urotensin is found in the teleost caudal neurosecretory system. It has a suggested role in osmoregulation and as a corticotropin-releasing factor. The non-hormonal portion of this precursor may be a urotensin binding protein, urophysin. This is Prepro-urotensin II-alpha from Cyprinus carpio (Common carp).